A 546-amino-acid polypeptide reads, in one-letter code: Chaperonin GroEL 1 (546 aa).

Residues 30–33 (TLGP), K51, 87–91 (DGTTT), G415, 479–481 (NAA), and D495 each bind ATP. A disordered region spans residues 526–546 (KEDAPMPGGMPGGMGGMGMDM). A compositionally biased stretch (gly residues) spans 534–546 (GMPGGMGGMGMDM).

This sequence belongs to the chaperonin (HSP60) family. In terms of assembly, forms a cylinder of 14 subunits composed of two heptameric rings stacked back-to-back. Interacts with the co-chaperonin GroES.

It is found in the cytoplasm. It catalyses the reaction ATP + H2O + a folded polypeptide = ADP + phosphate + an unfolded polypeptide.. In terms of biological role, together with its co-chaperonin GroES, plays an essential role in assisting protein folding. The GroEL-GroES system forms a nano-cage that allows encapsulation of the non-native substrate proteins and provides a physical environment optimized to promote and accelerate protein folding. This Burkholderia pseudomallei (strain 1106a) protein is Chaperonin GroEL 1.